We begin with the raw amino-acid sequence, 171 residues long: 3-hydroxydecanoyl-[acyl-carrier-protein] dehydratase (171 aa).

The active site involves His71.

Belongs to the thioester dehydratase family. FabA subfamily. Homodimer.

It localises to the cytoplasm. It catalyses the reaction a (3R)-hydroxyacyl-[ACP] = a (2E)-enoyl-[ACP] + H2O. The enzyme catalyses (3R)-hydroxydecanoyl-[ACP] = (2E)-decenoyl-[ACP] + H2O. The catalysed reaction is (2E)-decenoyl-[ACP] = (3Z)-decenoyl-[ACP]. It participates in lipid metabolism; fatty acid biosynthesis. Functionally, necessary for the introduction of cis unsaturation into fatty acids. Catalyzes the dehydration of (3R)-3-hydroxydecanoyl-ACP to E-(2)-decenoyl-ACP and then its isomerization to Z-(3)-decenoyl-ACP. Can catalyze the dehydratase reaction for beta-hydroxyacyl-ACPs with saturated chain lengths up to 16:0, being most active on intermediate chain length. This Rhizobium rhizogenes (strain K84 / ATCC BAA-868) (Agrobacterium radiobacter) protein is 3-hydroxydecanoyl-[acyl-carrier-protein] dehydratase.